A 443-amino-acid chain; its full sequence is Ribosomal protein uS12 methylthiotransferase RimO (443 aa).

One can recognise an MTTase N-terminal domain in the interval 5–116; sequence PTIAINHLGC…IVDIIRRTEQ (112 aa). Residues Cys14, Cys50, Cys79, Cys154, Cys158, and Cys161 each contribute to the [4Fe-4S] cluster site. Positions 140–369 constitute a Radical SAM core domain; it reads TTNEAIAYLR…MALQQPISAQ (230 aa). The TRAM domain occupies 372 to 438; it reads AACLGQTLDV…DYDLYGMTAE (67 aa).

The protein belongs to the methylthiotransferase family. RimO subfamily. [4Fe-4S] cluster serves as cofactor.

The protein localises to the cytoplasm. The enzyme catalyses L-aspartate(89)-[ribosomal protein uS12]-hydrogen + (sulfur carrier)-SH + AH2 + 2 S-adenosyl-L-methionine = 3-methylsulfanyl-L-aspartate(89)-[ribosomal protein uS12]-hydrogen + (sulfur carrier)-H + 5'-deoxyadenosine + L-methionine + A + S-adenosyl-L-homocysteine + 2 H(+). Catalyzes the methylthiolation of an aspartic acid residue of ribosomal protein uS12. This is Ribosomal protein uS12 methylthiotransferase RimO from Synechocystis sp. (strain ATCC 27184 / PCC 6803 / Kazusa).